A 429-amino-acid polypeptide reads, in one-letter code: MSQTLQAVRGMNDVLPDEAEFWELFEDTIRSWLKGYGYRPIRMPIVEPTPLFKRAIGEVTDIVEKEMYSFVDGLNGEALTLRPEGTAGCVRAVIEHNLAARQTQRLYYIGQMFRHERPQKGRYRQFHQVGVESFGMAGPDIDAEMILMGARLWADLGLDGIELQLNSLGQPEERALHRAALITYFEENAELLDEDAKRRLHTNPLRILDTKNPAMQELCAAAPKLIDYLGAESLAHFEGVQRVLRDAGVPFTINPRLVRGLDYYNLTVFEWVTDKLGAQGTVCAGGRYDGLVEQLGGKPTPACGFAMGVERLIALIRESGGEPAAPAPDVYLVHQGEAAARQAFRVAEGLRDQGINVLQHCGGGSFKSQMKKADGSGATFAVIIGDDEAATGEAQLKSLRAEGSAQLKLKVDDLAEAIIGQLIDSDEEE.

Belongs to the class-II aminoacyl-tRNA synthetase family. Homodimer.

Its subcellular location is the cytoplasm. It carries out the reaction tRNA(His) + L-histidine + ATP = L-histidyl-tRNA(His) + AMP + diphosphate + H(+). In Dechloromonas aromatica (strain RCB), this protein is Histidine--tRNA ligase.